We begin with the raw amino-acid sequence, 249 residues long: Probable transcriptional regulatory protein ZMO0153 (249 aa).

This sequence belongs to the TACO1 family.

Its subcellular location is the cytoplasm. In Zymomonas mobilis subsp. mobilis (strain ATCC 31821 / ZM4 / CP4), this protein is Probable transcriptional regulatory protein ZMO0153.